The chain runs to 117 residues: Photosystem II reaction center Psb28 protein (117 aa).

The protein belongs to the Psb28 family. As to quaternary structure, part of the photosystem II complex.

It is found in the cellular thylakoid membrane. The polypeptide is Photosystem II reaction center Psb28 protein (Prochlorococcus marinus (strain MIT 9215)).